The primary structure comprises 85 residues: U4-theraphotoxin-Hhn1a (85 aa).

Residues 1-22 form the signal peptide; it reads MKVTLIAILTCAAVLVLHTTAA. A propeptide spanning residues 23 to 48 is cleaved from the precursor; sequence EELEAESQLMKVGMPDTELAAVDEER. Intrachain disulfides connect C52–C66, C56–C77, and C71–C82.

This sequence belongs to the neurotoxin 12 (Hwtx-2) family. 02 (Hwtx-2) subfamily. In terms of assembly, monomer. In terms of tissue distribution, expressed by the venom gland.

It localises to the secreted. Its function is as follows. Neurotoxin active on both insects and mammals. The polypeptide is U4-theraphotoxin-Hhn1a (Cyriopagopus hainanus (Chinese bird spider)).